The primary structure comprises 457 residues: F-box/LRR-repeat protein At3g62440 (457 aa).

Residues 1 to 49 (MDRISNLPDEIICHIGSFLSAREAAFTTVLSKRWHNLFTIVPDLHFDSS) enclose the F-box domain. LRR repeat units follow at residues 53–79 (GESL…SLKW), 147–174 (LSLG…SLYH), 177–202 (FYEF…TVCG), 229–254 (WDAF…YYSD), 283–310 (WGKG…NLYT), and 337–362 (LSNF…NIDG).

This Arabidopsis thaliana (Mouse-ear cress) protein is F-box/LRR-repeat protein At3g62440.